Reading from the N-terminus, the 257-residue chain is UPF0246 protein YaaA (257 aa).

Belongs to the UPF0246 family.

The chain is UPF0246 protein YaaA from Salmonella arizonae (strain ATCC BAA-731 / CDC346-86 / RSK2980).